We begin with the raw amino-acid sequence, 610 residues long: F-box/LRR-repeat protein 4 (610 aa).

The region spanning 5-52 (DRINNCLPEELILEIFRRLESKPNRDACSLVCKRWLSLERFSRTTLRI) is the F-box domain. LRR repeat units lie at residues 53 to 79 (GASF…HVDE), 124 to 149 (SSSL…SLIW), 150 to 175 (CPNV…DLQG), 178 to 200 (VGDQ…NLRF), 201 to 227 (CEGL…GVAA), 228 to 253 (SAKI…YLDS), 256 to 277 (IHDK…LKLQ), 278 to 303 (CVSV…ALYS), 304 to 329 (FQHF…TLSD), 330 to 355 (CYFV…EING), 356 to 381 (CHNI…ALLY), 382 to 407 (CQRI…HLVD), 408 to 433 (CSGI…HIRR), 434 to 459 (CYEI…SLRF), 460 to 484 (CDKV…NVSG), 485 to 510 (CNQI…DISV), 511 to 536 (LQNI…VLSH), 537 to 562 (CHHI…HMVY), and 563 to 588 (CPGI…LIEK). The interval 88–125 (LSPSPKRKRGRDSSSPSSSKRKKLTDKTHSGAENVESS) is disordered.

The chain is F-box/LRR-repeat protein 4 (FBL4) from Arabidopsis thaliana (Mouse-ear cress).